Consider the following 612-residue polypeptide: Sulfite reductase [NADPH] hemoprotein beta-component (612 aa).

Residues 1 to 26 (MDDHKPIETPDGPAVDTPGIGARRYE) are disordered. Residues cysteine 469, cysteine 475, cysteine 514, and cysteine 518 each coordinate [4Fe-4S] cluster. Residue cysteine 518 coordinates siroheme.

This sequence belongs to the nitrite and sulfite reductase 4Fe-4S domain family. As to quaternary structure, alpha(8)-beta(8). The alpha component is a flavoprotein, the beta component is a hemoprotein. Requires siroheme as cofactor. [4Fe-4S] cluster serves as cofactor.

The enzyme catalyses hydrogen sulfide + 3 NADP(+) + 3 H2O = sulfite + 3 NADPH + 4 H(+). The protein operates within sulfur metabolism; hydrogen sulfide biosynthesis; hydrogen sulfide from sulfite (NADPH route): step 1/1. Component of the sulfite reductase complex that catalyzes the 6-electron reduction of sulfite to sulfide. This is one of several activities required for the biosynthesis of L-cysteine from sulfate. The polypeptide is Sulfite reductase [NADPH] hemoprotein beta-component (Methylorubrum extorquens (strain CM4 / NCIMB 13688) (Methylobacterium extorquens)).